The chain runs to 303 residues: Aspartate carbamoyltransferase catalytic subunit (303 aa).

Carbamoyl phosphate is bound by residues Arg49 and Thr50. Residue Lys77 coordinates L-aspartate. 3 residues coordinate carbamoyl phosphate: Arg99, His126, and Gln129. Positions 159 and 211 each coordinate L-aspartate. Carbamoyl phosphate-binding residues include Ser252 and Pro253.

This sequence belongs to the aspartate/ornithine carbamoyltransferase superfamily. ATCase family. As to quaternary structure, heterododecamer (2C3:3R2) of six catalytic PyrB chains organized as two trimers (C3), and six regulatory PyrI chains organized as three dimers (R2).

It catalyses the reaction carbamoyl phosphate + L-aspartate = N-carbamoyl-L-aspartate + phosphate + H(+). It participates in pyrimidine metabolism; UMP biosynthesis via de novo pathway; (S)-dihydroorotate from bicarbonate: step 2/3. Functionally, catalyzes the condensation of carbamoyl phosphate and aspartate to form carbamoyl aspartate and inorganic phosphate, the committed step in the de novo pyrimidine nucleotide biosynthesis pathway. The protein is Aspartate carbamoyltransferase catalytic subunit of Listeria monocytogenes serotype 4b (strain F2365).